The sequence spans 150 residues: Probable deoxyuridine 5'-triphosphate nucleotidohydrolase (150 aa).

The protein belongs to the dCTP deaminase family. Archaeal dUTPase subfamily.

It catalyses the reaction dUTP + H2O = dUMP + diphosphate + H(+). It participates in pyrimidine metabolism; dUMP biosynthesis; dUMP from dCTP (dUTP route): step 2/2. In terms of biological role, this enzyme is involved in nucleotide metabolism: it produces dUMP, the immediate precursor of thymidine nucleotides and it decreases the intracellular concentration of dUTP so that uracil cannot be incorporated into DNA. The protein is Probable deoxyuridine 5'-triphosphate nucleotidohydrolase of Methanothermobacter thermautotrophicus (strain ATCC 29096 / DSM 1053 / JCM 10044 / NBRC 100330 / Delta H) (Methanobacterium thermoautotrophicum).